A 68-amino-acid polypeptide reads, in one-letter code: Large ribosomal subunit protein bL33c (68 aa).

It belongs to the bacterial ribosomal protein bL33 family.

Its subcellular location is the plastid. It is found in the chloroplast. This is Large ribosomal subunit protein bL33c from Lactuca sativa (Garden lettuce).